The chain runs to 189 residues: Peptidyl-tRNA hydrolase (189 aa).

Tyrosine 15 contributes to the tRNA binding site. Histidine 20 acts as the Proton acceptor in catalysis. TRNA contacts are provided by phenylalanine 66, asparagine 68, and asparagine 114.

Belongs to the PTH family. In terms of assembly, monomer.

It localises to the cytoplasm. The enzyme catalyses an N-acyl-L-alpha-aminoacyl-tRNA + H2O = an N-acyl-L-amino acid + a tRNA + H(+). Its function is as follows. Hydrolyzes ribosome-free peptidyl-tRNAs (with 1 or more amino acids incorporated), which drop off the ribosome during protein synthesis, or as a result of ribosome stalling. Functionally, catalyzes the release of premature peptidyl moieties from peptidyl-tRNA molecules trapped in stalled 50S ribosomal subunits, and thus maintains levels of free tRNAs and 50S ribosomes. The polypeptide is Peptidyl-tRNA hydrolase (Streptococcus mutans serotype c (strain ATCC 700610 / UA159)).